The sequence spans 177 residues: ATP synthase subunit delta (177 aa).

Belongs to the ATPase delta chain family. F-type ATPases have 2 components, F(1) - the catalytic core - and F(0) - the membrane proton channel. F(1) has five subunits: alpha(3), beta(3), gamma(1), delta(1), epsilon(1). F(0) has three main subunits: a(1), b(2) and c(10-14). The alpha and beta chains form an alternating ring which encloses part of the gamma chain. F(1) is attached to F(0) by a central stalk formed by the gamma and epsilon chains, while a peripheral stalk is formed by the delta and b chains.

It is found in the cell inner membrane. In terms of biological role, f(1)F(0) ATP synthase produces ATP from ADP in the presence of a proton or sodium gradient. F-type ATPases consist of two structural domains, F(1) containing the extramembraneous catalytic core and F(0) containing the membrane proton channel, linked together by a central stalk and a peripheral stalk. During catalysis, ATP synthesis in the catalytic domain of F(1) is coupled via a rotary mechanism of the central stalk subunits to proton translocation. Functionally, this protein is part of the stalk that links CF(0) to CF(1). It either transmits conformational changes from CF(0) to CF(1) or is implicated in proton conduction. This chain is ATP synthase subunit delta, found in Idiomarina loihiensis (strain ATCC BAA-735 / DSM 15497 / L2-TR).